The chain runs to 248 residues: Triosephosphate isomerase (248 aa).

A substrate-binding site is contributed by 9 to 11 (NWK). The active-site Electrophile is the His-92. The active-site Proton acceptor is the Glu-164. Substrate is bound by residues Gly-170, Ser-209, and 230-231 (GG).

Belongs to the triosephosphate isomerase family. In terms of assembly, homodimer.

The protein resides in the cytoplasm. The enzyme catalyses D-glyceraldehyde 3-phosphate = dihydroxyacetone phosphate. It functions in the pathway carbohydrate biosynthesis; gluconeogenesis. The protein operates within carbohydrate degradation; glycolysis; D-glyceraldehyde 3-phosphate from glycerone phosphate: step 1/1. Involved in the gluconeogenesis. Catalyzes stereospecifically the conversion of dihydroxyacetone phosphate (DHAP) to D-glyceraldehyde-3-phosphate (G3P). In Thiobacillus denitrificans (strain ATCC 25259 / T1), this protein is Triosephosphate isomerase.